We begin with the raw amino-acid sequence, 244 residues long: Membrane-spanning 4-domains subfamily A member 6B (244 aa).

The Cytoplasmic portion of the chain corresponds to 1–46; it reads MIPQVVTSETVAMISPNGMSLPQTDKPQPFHQWQDSLKKHLKAEIK. The chain crosses the membrane as a helical span at residues 47–67; sequence VMAAIQIMCAVMVLSLGIILA. At 68-84 the chain is on the extracellular side; it reads SVPSNLHFTSVFSVLLK. A helical transmembrane segment spans residues 85-105; it reads SGYPFIGALFFIVSGILSIVT. Residues 106–121 lie on the Cytoplasmic side of the membrane; the sequence is ETKSTKILVDSSLTLN. Residues 122–142 form a helical membrane-spanning segment; that stretch reads ILSVSFAFMGIIIISVSLAGL. The Extracellular portion of the chain corresponds to 143 to 176; sequence HPASEQCLQSKELRPTEYHYYQFLDRNECFAAKS. The helical transmembrane segment at 177–197 threads the bilayer; sequence VLAGVFSLMLISTMLELGLAV. Residues 198–244 lie on the Cytoplasmic side of the membrane; the sequence is LTAMLWWKQSHSNIPGNVMFLPHSSNNDSNMESKVLCNPSYEEQLVC.

This sequence belongs to the MS4A family. Expressed at high levels in thymus, spleen, and peripheral lymph nodes, with less abundant levels in non-lymphoid tissues.

It localises to the membrane. Its function is as follows. May be involved in signal transduction as a component of a multimeric receptor complex. The protein is Membrane-spanning 4-domains subfamily A member 6B (Ms4a6b) of Mus musculus (Mouse).